The chain runs to 210 residues: Large ribosomal subunit protein uL3 (210 aa).

This sequence belongs to the universal ribosomal protein uL3 family. In terms of assembly, part of the 50S ribosomal subunit. Forms a cluster with proteins L14 and L19.

One of the primary rRNA binding proteins, it binds directly near the 3'-end of the 23S rRNA, where it nucleates assembly of the 50S subunit. The polypeptide is Large ribosomal subunit protein uL3 (Pseudothermotoga lettingae (strain ATCC BAA-301 / DSM 14385 / NBRC 107922 / TMO) (Thermotoga lettingae)).